The following is a 322-amino-acid chain: Cyclin mcs2 (322 aa).

A Phosphoserine modification is found at S310.

It belongs to the cyclin family. Cyclin C subfamily. As to quaternary structure, one of the nine subunits forming the core-TFIIH basal transcription factor. Interacts with crk1 and skp1.

The protein resides in the nucleus. Functionally, essential for progression through the cell cycle. Possesses kinase activity that can be detected when myelin basic protein (MBP) is provided as an exogenous substrate. This is Cyclin mcs2 (mcs2) from Schizosaccharomyces pombe (strain 972 / ATCC 24843) (Fission yeast).